We begin with the raw amino-acid sequence, 319 residues long: Plasmodesmata-located protein 4 (319 aa).

The first 26 residues, 1-26 (MVVHLISLLTQTLALIILSLPSIINT), serve as a signal peptide directing secretion. Over 27-288 (SQLDYDTLVF…EGSKVNTGKS (262 aa)) the chain is Extracellular. Disulfide bonds link Cys39–Cys127, Cys103–Cys112, Cys115–Cys140, Cys177–Cys247, Cys223–Cys232, and Cys235–Cys260. 2 Gnk2-homologous domains span residues 45–149 (NILQ…FERI) and 170–269 (HGLI…YHPH). A helical transmembrane segment spans residues 289 to 309 (LAIVVGGVAALVFVAIFFMFL). The tract at residues 289 to 309 (LAIVVGGVAALVFVAIFFMFL) is necessary and sufficient for plasmodesmal targeting. At 310-319 (KSLRKKGDDC) the chain is on the cytoplasmic side.

It belongs to the cysteine-rich repeat secretory protein family. Plasmodesmata-located proteins (PDLD) subfamily. As to quaternary structure, (Microbial infection) Interacts with Grapevine fanleaf virus (GFLV) 2B-MP. As to expression, highly expressed in seeds and roots.

It localises to the cell membrane. It is found in the cell junction. The protein localises to the plasmodesma. In terms of biological role, modulates cell-to-cell trafficking. This chain is Plasmodesmata-located protein 4, found in Arabidopsis thaliana (Mouse-ear cress).